The following is a 500-amino-acid chain: NAD(P)H-quinone oxidoreductase chain 4, chloroplastic (500 aa).

A run of 14 helical transmembrane segments spans residues 4–24 (FPWL…MLFL), 35–55 (YTIC…CYNF), 87–107 (IGTI…AFPV), 113–130 (LFHF…GSFS), 134–154 (LLLF…LLSM), 167–187 (FILY…GISL), 211–231 (ILFY…IPLH), 242–262 (HYST…YGLV), 272–292 (AHSM…IYAA), 305–325 (IAYS…SITD), 330–350 (GAIL…FLAG), 386–406 (LALP…GIIT), 416–436 (ILII…LLSM), and 462–482 (LFLS…PDFV).

The protein belongs to the complex I subunit 4 family.

The protein resides in the plastid. It localises to the chloroplast thylakoid membrane. It catalyses the reaction a plastoquinone + NADH + (n+1) H(+)(in) = a plastoquinol + NAD(+) + n H(+)(out). The catalysed reaction is a plastoquinone + NADPH + (n+1) H(+)(in) = a plastoquinol + NADP(+) + n H(+)(out). In Nasturtium officinale (Watercress), this protein is NAD(P)H-quinone oxidoreductase chain 4, chloroplastic.